A 598-amino-acid polypeptide reads, in one-letter code: Probable polysaccharide biosynthesis protein EpsC (598 aa).

4 consecutive transmembrane segments (helical) span residues 1 to 21, 31 to 51, 63 to 83, and 87 to 107; these read MIIALDTYLVLNSVIAGYQFL, GALLLTAVSLLLSYHVCAFLF, LGELIVLLKGITLSAAVTGVI, and VYHTMFFRLLTACWVLQLLSI.

This sequence belongs to the polysaccharide synthase family.

It localises to the cell membrane. Its function is as follows. Involved in biofilm formation. The polypeptide is Probable polysaccharide biosynthesis protein EpsC (epsC) (Bacillus subtilis (strain 168)).